The primary structure comprises 96 residues: Co-chaperonin GroES (96 aa).

This sequence belongs to the GroES chaperonin family. As to quaternary structure, heptamer of 7 subunits arranged in a ring. Interacts with the chaperonin GroEL.

Its subcellular location is the cytoplasm. In terms of biological role, together with the chaperonin GroEL, plays an essential role in assisting protein folding. The GroEL-GroES system forms a nano-cage that allows encapsulation of the non-native substrate proteins and provides a physical environment optimized to promote and accelerate protein folding. GroES binds to the apical surface of the GroEL ring, thereby capping the opening of the GroEL channel. The sequence is that of Co-chaperonin GroES from Shewanella denitrificans (strain OS217 / ATCC BAA-1090 / DSM 15013).